A 153-amino-acid polypeptide reads, in one-letter code: Riboflavin synthase (153 aa).

This sequence belongs to the DMRL synthase family. As to quaternary structure, homooligomer. Requires Mg(2+) as cofactor.

It catalyses the reaction 2 6,7-dimethyl-8-(1-D-ribityl)lumazine + H(+) = 5-amino-6-(D-ribitylamino)uracil + riboflavin. It participates in cofactor biosynthesis; riboflavin biosynthesis; riboflavin from 2-hydroxy-3-oxobutyl phosphate and 5-amino-6-(D-ribitylamino)uracil: step 2/2. Its activity is regulated as follows. Inhibited by EDTA. In terms of biological role, the relatively low activity of this enzyme suggested that 6,7-dimethyl-8-ribityllumazine might not be its natural substrate. The chain is Riboflavin synthase (ribC) from Methanothermobacter marburgensis (strain ATCC BAA-927 / DSM 2133 / JCM 14651 / NBRC 100331 / OCM 82 / Marburg) (Methanobacterium thermoautotrophicum).